A 554-amino-acid polypeptide reads, in one-letter code: CTP synthase (554 aa).

The tract at residues 1–265 (MTPLIFVTGG…DELVIDQFKL (265 aa)) is amidoligase domain. Ser13 lines the CTP pocket. Ser13 serves as a coordination point for UTP. ATP-binding positions include 14–19 (SLGKGI) and Asp71. Mg(2+)-binding residues include Asp71 and Glu139. CTP-binding positions include 146-148 (DIE), 186-191 (KTKPTQ), and Lys222. UTP contacts are provided by residues 186–191 (KTKPTQ) and Lys222. In terms of domain architecture, Glutamine amidotransferase type-1 spans 292–545 (TIAVVGKYVD…VRAAREKKAG (254 aa)). L-glutamine is bound at residue Gly353. Cys380 acts as the Nucleophile; for glutamine hydrolysis in catalysis. L-glutamine contacts are provided by residues 381 to 384 (YGMQ), Glu404, and Arg471. Residues His518 and Glu520 contribute to the active site.

The protein belongs to the CTP synthase family. Homotetramer.

The catalysed reaction is UTP + L-glutamine + ATP + H2O = CTP + L-glutamate + ADP + phosphate + 2 H(+). It carries out the reaction L-glutamine + H2O = L-glutamate + NH4(+). The enzyme catalyses UTP + NH4(+) + ATP = CTP + ADP + phosphate + 2 H(+). It functions in the pathway pyrimidine metabolism; CTP biosynthesis via de novo pathway; CTP from UDP: step 2/2. Its activity is regulated as follows. Allosterically activated by GTP, when glutamine is the substrate; GTP has no effect on the reaction when ammonia is the substrate. The allosteric effector GTP functions by stabilizing the protein conformation that binds the tetrahedral intermediate(s) formed during glutamine hydrolysis. Inhibited by the product CTP, via allosteric rather than competitive inhibition. Functionally, catalyzes the ATP-dependent amination of UTP to CTP with either L-glutamine or ammonia as the source of nitrogen. Regulates intracellular CTP levels through interactions with the four ribonucleotide triphosphates. The polypeptide is CTP synthase (Xanthomonas campestris pv. campestris (strain 8004)).